The following is a 93-amino-acid chain: Small ribosomal subunit protein uS19 (93 aa).

Belongs to the universal ribosomal protein uS19 family.

In terms of biological role, protein S19 forms a complex with S13 that binds strongly to the 16S ribosomal RNA. The chain is Small ribosomal subunit protein uS19 from Lactobacillus helveticus (strain DPC 4571).